The primary structure comprises 310 residues: MSFPDITPDLKAAMPSLRGRLLGNEPLAPLTWFRVGGPAQALFTPADEDDLGYFLSRLPTEVPMLCIGVGSNLIVRDGGLPGVVIRLAPRGFGDTRADGEIVYAGAAALDKRVAETAAAAKLGGLEFYFGIPGTVGGALRMNAGANGRETKDALIDATAFDRSGNRRVLGNADMQFSYRHSGADPALIFTSARFRGTPASPDAIRAKMNEVQAHRELAQPVREKTGGSTFKNPPDNSAWKLIDAAGCRGLRVGGAQVSEMHCNFLINTSDATAADIETLGETVRERVKAQSGIELQWEIKRIGVAVDAAR.

The FAD-binding PCMH-type domain occupies 35 to 199 (VGGPAQALFT…TSARFRGTPA (165 aa)). The active site involves Arg179. Ser228 (proton donor) is an active-site residue. The active site involves Glu298.

It belongs to the MurB family. FAD is required as a cofactor.

The protein resides in the cytoplasm. The catalysed reaction is UDP-N-acetyl-alpha-D-muramate + NADP(+) = UDP-N-acetyl-3-O-(1-carboxyvinyl)-alpha-D-glucosamine + NADPH + H(+). The protein operates within cell wall biogenesis; peptidoglycan biosynthesis. Functionally, cell wall formation. The chain is UDP-N-acetylenolpyruvoylglucosamine reductase from Rhodopseudomonas palustris (strain BisB5).